The chain runs to 148 residues: Hemoglobin subunit beta (148 aa).

Residues 3 to 148 (XWTDXERHVI…AVAALGKQYH (146 aa)) form the Globin domain. Residues His64 and His93 each contribute to the heme b site.

The protein belongs to the globin family. As to quaternary structure, heterotetramer of two alpha chains and two beta chains. In terms of tissue distribution, red blood cells.

In terms of biological role, involved in oxygen transport from gills to the various peripheral tissues. The chain is Hemoglobin subunit beta (hbb) from Silurus asotus (Amur catfish).